Consider the following 290-residue polypeptide: Nucleoid occlusion protein (290 aa).

A DNA-binding region (H-T-H motif) is located at residues 153–172 (EALAQRLGKGQSTIANKLRL).

It belongs to the ParB family.

The protein resides in the cytoplasm. It is found in the nucleoid. Functionally, effects nucleoid occlusion by binding relatively nonspecifically to DNA and preventing the assembly of the division machinery in the vicinity of the nucleoid, especially under conditions that disturb the cell cycle. It helps to coordinate cell division and chromosome segregation by preventing the formation of the Z ring through the nucleoid, which would cause chromosome breakage. In Bacillus cytotoxicus (strain DSM 22905 / CIP 110041 / 391-98 / NVH 391-98), this protein is Nucleoid occlusion protein.